Consider the following 177-residue polypeptide: Putative adenylate kinase (177 aa).

5 residues coordinate ATP: glycine 10, glycine 12, lysine 13, threonine 14, and threonine 15. Positions 30-53 (DITEAVKKYKLYTEKDEDMDSYVI) are NMP. Positions 103-113 (KRGYKPKKVLE) are LID. Arginine 104 provides a ligand contact to ATP.

The protein belongs to the adenylate kinase family. AK6 subfamily. In terms of assembly, interacts with uS11. Not a structural component of 40S pre-ribosomes, but transiently interacts with them by binding to uS11.

The enzyme catalyses AMP + ATP = 2 ADP. It carries out the reaction ATP + H2O = ADP + phosphate + H(+). Broad-specificity nucleoside monophosphate (NMP) kinase that catalyzes the reversible transfer of the terminal phosphate group between nucleoside triphosphates and monophosphates. Also has ATPase activity. Involved in the late maturation steps of the 30S ribosomal particles, specifically 16S rRNA maturation. While NMP activity is not required for ribosome maturation, ATPase activity is. Associates transiently with small ribosomal subunit protein uS11. ATP hydrolysis breaks the interaction with uS11. May temporarily remove uS11 from the ribosome to enable a conformational change of the ribosomal RNA that is needed for the final maturation step of the small ribosomal subunit. This Methanocaldococcus jannaschii (strain ATCC 43067 / DSM 2661 / JAL-1 / JCM 10045 / NBRC 100440) (Methanococcus jannaschii) protein is Putative adenylate kinase.